A 97-amino-acid polypeptide reads, in one-letter code: DNA-directed RNA polymerase subunit omega (97 aa).

Belongs to the RNA polymerase subunit omega family. The RNAP catalytic core consists of 2 alpha, 1 beta, 1 beta' and 1 omega subunit. When a sigma factor is associated with the core the holoenzyme is formed, which can initiate transcription.

It catalyses the reaction RNA(n) + a ribonucleoside 5'-triphosphate = RNA(n+1) + diphosphate. Its function is as follows. Promotes RNA polymerase assembly. Latches the N- and C-terminal regions of the beta' subunit thereby facilitating its interaction with the beta and alpha subunits. The protein is DNA-directed RNA polymerase subunit omega of Coxiella burnetii (strain Dugway 5J108-111).